The following is a 219-amino-acid chain: Biofilm-associated metzincin protease inhibitor (219 aa).

A helical membrane pass occupies residues 4–24; it reads TWIYAASAAAIGGALIGGWLL. Residues 191 to 204 are compositionally biased toward basic and acidic residues; that stretch reads DIAARSDPHGDHVD. The disordered stretch occupies residues 191–219; the sequence is DIAARSDPHGDHVDAPLAELPPMPPPAQG. A compositionally biased stretch (pro residues) spans 209 to 219; the sequence is ELPPMPPPAQG.

The protein resides in the cell membrane. Inhibitor of the metalloendopeptidase Mep72. Forms a protein-protein complex with the protease, which is the product of its coregulated adjacent gene, and probably prevents premature protease activity until the protein has been secreted. In Pseudomonas aeruginosa (strain ATCC 15692 / DSM 22644 / CIP 104116 / JCM 14847 / LMG 12228 / 1C / PRS 101 / PAO1), this protein is Biofilm-associated metzincin protease inhibitor.